The sequence spans 114 residues: Cystatin Pr15a (114 aa).

A signal peptide spans 1 to 22 (MFTVKLLAFMVVAVSLQHLAEA). One can recognise a Cystatin domain in the interval 29–83 (GCPVEVDPNREDIKKSLAHVMAAKNSPDELVRIIKASTQVVNGIKYKVVFEVKNP).

This sequence belongs to the cystatin family. As to expression, expressed by the venom gland (anterior main gland) (at protein level).

The protein localises to the secreted. The polypeptide is Cystatin Pr15a (Platymeris rhadamanthus (Red spot assassin bug)).